Consider the following 271-residue polypeptide: Aspartate/glutamate leucyltransferase (271 aa).

Belongs to the R-transferase family. Bpt subfamily.

It localises to the cytoplasm. It carries out the reaction N-terminal L-glutamyl-[protein] + L-leucyl-tRNA(Leu) = N-terminal L-leucyl-L-glutamyl-[protein] + tRNA(Leu) + H(+). The catalysed reaction is N-terminal L-aspartyl-[protein] + L-leucyl-tRNA(Leu) = N-terminal L-leucyl-L-aspartyl-[protein] + tRNA(Leu) + H(+). Its function is as follows. Functions in the N-end rule pathway of protein degradation where it conjugates Leu from its aminoacyl-tRNA to the N-termini of proteins containing an N-terminal aspartate or glutamate. This Acinetobacter baumannii (strain SDF) protein is Aspartate/glutamate leucyltransferase.